The chain runs to 172 residues: AIG2-like protein B (172 aa).

Residue 15–20 (YGSFQE) participates in substrate binding. Glu-83 (proton acceptor) is an active-site residue. A compositionally biased stretch (basic and acidic residues) spans 146-165 (KRNPQGKGRDDFSNVLKEED). The tract at residues 146–172 (KRNPQGKGRDDFSNVLKEEDPANAPSS) is disordered.

This sequence belongs to the gamma-glutamylcyclotransferase family. Expressed in flowerss, leaves, stems, seeds and roots.

The protein localises to the cell membrane. Putative gamma-glutamylcyclotransferase. The chain is AIG2-like protein B from Arabidopsis thaliana (Mouse-ear cress).